The sequence spans 694 residues: MARTTPLERYRNIGIMAHIDAGKTTTTERILYYTGKSYKIGEVHEGTATMDWMEQEQERGITITSAATTAFWRDHRVNIIDTPGHVDFTIEVERSLRVLDGAVTVFDSVAGVEPQSETVWRQADKYGVPRICFVNKMDRIGANFYRCVDMIVDRLGARPLVMHLPIGEESGYIGLVDLLRNVAVIWKDESLGAEFEDQPIPADLVEKAAQYRAQLIETAVEMDDEAMEQYLGGEEPSFEVLQACIRKGTISRTFVPVLCGSAFKNKGVQPLLDAVIDYLPAPVDIPAIKGVKYGTEDEIAKHSTDDEPFAGLAFKIMNDPFVGSLTFVRVYSGVVESGSYIQNTVKEKRERVGRMLLMHANSREEIKEARAGDIVAFAGLKDTTTGDTLCDPTPSSLVVLERMEFPEPVIEVAVEPKSKADQEKMGIALARLAAEDPSFRVTSDVESGQTVIKGMGELHLEILVDRMKREFKVEANVGAPQVAYRETISKAYEVDYTHKKQTGGSGQFARVKIRFEPGEKGAGYVFENKVIGGSVPKEYVPGVDKGIRSAMDNGVIAGFPMIDFKATLTDGAYHDVDSSVLAFEIASRAAFREGIAKAGPKLLEPMMKVEVVTPEDYLGDVIGDLNSRRGQVNDMDQRGNARVITAMVPLANMFGYVNTLRSMSQGRAQYSMTFDHYSEVPQNVSDEIRAKLAG.

A tr-type G domain is found at 8 to 283 (ERYRNIGIMA…AVIDYLPAPV (276 aa)). GTP contacts are provided by residues 17–24 (AHIDAGKT), 81–85 (DTPGH), and 135–138 (NKMD).

The protein belongs to the TRAFAC class translation factor GTPase superfamily. Classic translation factor GTPase family. EF-G/EF-2 subfamily.

It is found in the cytoplasm. Catalyzes the GTP-dependent ribosomal translocation step during translation elongation. During this step, the ribosome changes from the pre-translocational (PRE) to the post-translocational (POST) state as the newly formed A-site-bound peptidyl-tRNA and P-site-bound deacylated tRNA move to the P and E sites, respectively. Catalyzes the coordinated movement of the two tRNA molecules, the mRNA and conformational changes in the ribosome. The chain is Elongation factor G from Paramagnetospirillum magneticum (strain ATCC 700264 / AMB-1) (Magnetospirillum magneticum).